A 75-amino-acid polypeptide reads, in one-letter code: Small ribosomal subunit protein bS18 (75 aa).

It belongs to the bacterial ribosomal protein bS18 family. In terms of assembly, part of the 30S ribosomal subunit. Forms a tight heterodimer with protein bS6.

Binds as a heterodimer with protein bS6 to the central domain of the 16S rRNA, where it helps stabilize the platform of the 30S subunit. This is Small ribosomal subunit protein bS18 from Anaplasma marginale (strain St. Maries).